The primary structure comprises 282 residues: Hydroxyethylthiazole kinase 2 (282 aa).

Residue Met44 coordinates substrate. ATP-binding residues include Arg120 and Ser179. Gly206 lines the substrate pocket.

It belongs to the Thz kinase family. Requires Mg(2+) as cofactor.

The catalysed reaction is 5-(2-hydroxyethyl)-4-methylthiazole + ATP = 4-methyl-5-(2-phosphooxyethyl)-thiazole + ADP + H(+). The protein operates within cofactor biosynthesis; thiamine diphosphate biosynthesis; 4-methyl-5-(2-phosphoethyl)-thiazole from 5-(2-hydroxyethyl)-4-methylthiazole: step 1/1. Functionally, catalyzes the phosphorylation of the hydroxyl group of 4-methyl-5-beta-hydroxyethylthiazole (THZ). This chain is Hydroxyethylthiazole kinase 2, found in Methanosphaera stadtmanae (strain ATCC 43021 / DSM 3091 / JCM 11832 / MCB-3).